The sequence spans 611 residues: Broad-specificity linear acyl-CoA dehydrogenase FadE5 (611 aa).

FAD contacts are provided by residues 162-165 (MVLT), serine 171, and threonine 198. An a 2,3-saturated acyl-CoA-binding site is contributed by serine 171. A 2,3-saturated acyl-CoA contacts are provided by residues 224-225 (TK) and arginine 301. Arginine 326 is an FAD binding site. Lysine 338 contacts a 2,3-saturated acyl-CoA. 420-424 (QTLGG) is an FAD binding site. Residue glutamate 447 coordinates a 2,3-saturated acyl-CoA. Glutamate 447 functions as the Proton acceptor in the catalytic mechanism. Residue threonine 449 participates in FAD binding. Residues aspartate 456 and 460-461 (RK) each bind a 2,3-saturated acyl-CoA.

Belongs to the acyl-CoA dehydrogenase family. Homodimer. FAD is required as a cofactor.

The catalysed reaction is a long-chain 2,3-saturated fatty acyl-CoA + oxidized [electron-transfer flavoprotein] + H(+) = a long-chain (2E)-enoyl-CoA + reduced [electron-transfer flavoprotein]. It catalyses the reaction a medium-chain 2,3-saturated fatty acyl-CoA + oxidized [electron-transfer flavoprotein] + H(+) = a medium-chain (2E)-enoyl-CoA + reduced [electron-transfer flavoprotein]. It carries out the reaction a short-chain 2,3-saturated fatty acyl-CoA + oxidized [electron-transfer flavoprotein] + H(+) = a short-chain (2E)-enoyl-CoA + reduced [electron-transfer flavoprotein]. The enzyme catalyses octadecanoyl-CoA + oxidized [electron-transfer flavoprotein] + H(+) = (2E)-octadecenoyl-CoA + reduced [electron-transfer flavoprotein]. The catalysed reaction is oxidized [electron-transfer flavoprotein] + hexadecanoyl-CoA + H(+) = (2E)-hexadecenoyl-CoA + reduced [electron-transfer flavoprotein]. It catalyses the reaction dodecanoyl-CoA + oxidized [electron-transfer flavoprotein] + H(+) = (2E)-dodecenoyl-CoA + reduced [electron-transfer flavoprotein]. It carries out the reaction decanoyl-CoA + oxidized [electron-transfer flavoprotein] + H(+) = (2E)-decenoyl-CoA + reduced [electron-transfer flavoprotein]. The enzyme catalyses hexanoyl-CoA + oxidized [electron-transfer flavoprotein] + H(+) = (2E)-hexenoyl-CoA + reduced [electron-transfer flavoprotein]. The catalysed reaction is butanoyl-CoA + oxidized [electron-transfer flavoprotein] + H(+) = (2E)-butenoyl-CoA + reduced [electron-transfer flavoprotein]. It functions in the pathway lipid metabolism; fatty acid metabolism. In terms of biological role, acyl-CoA dehydrogenase that exhibits broad specificity for linear acyl-CoA substrates, with a preference for long-chain substrates. The protein is Broad-specificity linear acyl-CoA dehydrogenase FadE5 of Mycobacterium tuberculosis (strain ATCC 25618 / H37Rv).